The following is a 455-amino-acid chain: Ectonucleoside triphosphate diphosphohydrolase 6 (455 aa).

Residues 1 to 12 (MRKIPNHGTLRM) lie on the Cytoplasmic side of the membrane. The helical transmembrane segment at 13–32 (TKVAYPLGLCVGLFIYVAYI) threads the bilayer. Over 33-455 (KWHRASAAQA…SLKRQKVPAL (423 aa)) the chain is Lumenal. Residue E196 is the Proton acceptor of the active site. Cystine bridges form between C297–C327 and C387–C401.

It belongs to the GDA1/CD39 NTPase family. It depends on Mg(2+) as a cofactor. The cofactor is Ca(2+). In terms of processing, N-glycosylated.

Its subcellular location is the golgi apparatus membrane. The protein localises to the secreted. The protein resides in the cell membrane. It catalyses the reaction a ribonucleoside 5'-diphosphate + H2O = a ribonucleoside 5'-phosphate + phosphate + H(+). The enzyme catalyses IDP + H2O = IMP + phosphate + H(+). It carries out the reaction GDP + H2O = GMP + phosphate + H(+). The catalysed reaction is UDP + H2O = UMP + phosphate + H(+). Catalyzes the hydrolysis of nucleoside triphosphates and diphosphates in a calcium- or magnesium-dependent manner. Has a strong preference for nucleoside diphosphates, preferentially hydrolyzes GDP, IDP, and UDP, with slower hydrolysis of CDP, ITP, GTP, CTP, ADP, and UTP and virtually no hydrolysis of ATP. The membrane bound form might support glycosylation reactions in the Golgi apparatus and, when released from cells, might catalyze the hydrolysis of extracellular nucleotides. In Mus musculus (Mouse), this protein is Ectonucleoside triphosphate diphosphohydrolase 6.